A 68-amino-acid polypeptide reads, in one-letter code: Large ribosomal subunit protein uL29 (68 aa).

It belongs to the universal ribosomal protein uL29 family.

This Geobacillus sp. (strain WCH70) protein is Large ribosomal subunit protein uL29.